We begin with the raw amino-acid sequence, 593 residues long: ATPase family AAA domain-containing protein 3-A (593 aa).

The tract at residues 1–64 (MSWLFGLNKG…AKAARELDQS (64 aa)) is disordered. Residues 1–242 (MSWLFGLNKG…FRTFISDWDK (242 aa)) are Mitochondrial intermembrane-facing. The span at 15-27 (PGVPGFPEPPSPP) shows a compositional bias: pro residues. 2 stretches are compositionally biased toward basic and acidic residues: residues 33–44 (GGDKNKPKDKWS) and 53–64 (RAAKAARELDQS). Residues 52–215 (ERAAKAAREL…QIRLKAAEHR (164 aa)) are a coiled coil. Residues 243–260 (VTATVAGLTLLAVGVYTA) traverse the membrane as a helical segment. Over 261-593 (KNATGVAGRY…LQPLLEGTQV (333 aa)) the chain is Mitochondrial matrix. 348–355 (GPPGTGKT) contacts ATP.

It belongs to the AAA ATPase family. In terms of assembly, can form homooligomers. Homodimer formation at the N-terminus may be regulated by ATP and is required for the interaction with the inner surface of the mitochondrial outer membrane and correct mitochondrial homeostasis.

The protein localises to the mitochondrion inner membrane. Its subcellular location is the mitochondrion matrix. The protein resides in the mitochondrion nucleoid. The enzyme catalyses ATP + H2O = ADP + phosphate + H(+). In terms of biological role, essential for mitochondrial network organization, mitochondrial metabolism and cell growth at organism and cellular level. May play an important role in mitochondrial protein synthesis. May also participate in mitochondrial DNA replication. May bind to mitochondrial DNA D-loops and contribute to nucleoid stability. Required for enhanced channeling of cholesterol for hormone-dependent steroidogenesis. Involved in mitochondrial-mediated antiviral innate immunity. Required to protect mitochondria from the PERK-mediated unfolded protein response: specifically inhibits the activity of EIF2AK3/PERK at mitochondria-endoplasmic reticulum contact sites, thereby providing a safe haven for mitochondrial protein translation during endoplasmic reticulum stress. Ability to inhibit EIF2AK3/PERK is independent of its ATPase activity. Also involved in the mitochondrial DNA damage response by promoting signaling between damaged genomes and the mitochondrial membrane, leading to activation of the integrated stress response (ISR). The protein is ATPase family AAA domain-containing protein 3-A (atad3-a) of Xenopus laevis (African clawed frog).